A 141-amino-acid polypeptide reads, in one-letter code: Endoribonuclease YbeY (141 aa).

Zn(2+)-binding residues include His105, His109, and Asp115.

It belongs to the endoribonuclease YbeY family. Zn(2+) serves as cofactor.

The protein resides in the cytoplasm. Single strand-specific metallo-endoribonuclease involved in late-stage 70S ribosome quality control and in maturation of the 3' terminus of the 16S rRNA. This chain is Endoribonuclease YbeY, found in Chloroherpeton thalassium (strain ATCC 35110 / GB-78).